We begin with the raw amino-acid sequence, 1220 residues long: Plasma membrane calcium-transporting ATPase 3 (1220 aa).

Over residues 1–20 the composition is skewed to polar residues; it reads MGDMANSSIEFHPKPQQQRD. Positions 1–23 are disordered; that stretch reads MGDMANSSIEFHPKPQQQRDVPQ. Residues 1 to 97 are Cytoplasmic-facing; that stretch reads MGDMANSSIE…NFIPPKQPKT (97 aa). Position 8 is a phosphoserine (Ser8). The helical transmembrane segment at 98-118 threads the bilayer; it reads FLQLVWEALQDVTLIILEVAA. Over 119 to 155 the chain is Extracellular; sequence IVSLGLSFYAPPGEESEACGNVSGGAEDEGEAEAGWI. The helical transmembrane segment at 156–176 threads the bilayer; that stretch reads EGAAILLSVICVVLVTAFNDW. Residues 177 to 364 are Cytoplasmic-facing; sequence SKEKQFRGLQ…KEKSVLQGKL (188 aa). Residues 298 to 355 form a disordered region; sequence EEEKKDKKGKQQDGAMESSQTKAKKQDGAVAMEMQPLKSAEGGEMEEREKKKANAPKK. Basic and acidic residues-rich tracts occupy residues 299–308 and 342–355; these read EEKKDKKGKQ and MEER…APKK. A helical membrane pass occupies residues 365–384; that stretch reads TKLAVQIGKAGLVMSAITVI. Residues 385-417 are Extracellular-facing; it reads ILVLYFVIETFVVEGRTWLAECTPVYVQYFVKF. The chain crosses the membrane as a helical span at residues 418-435; the sequence is FIIGVTVLVVAVPEGLPL. Residues 436 to 849 lie on the Cytoplasmic side of the membrane; the sequence is AVTISLAYSV…MWGRNVYDSI (414 aa). Asp473 functions as the 4-aspartylphosphate intermediate in the catalytic mechanism. Mg(2+) contacts are provided by Asp794 and Asp798. A helical membrane pass occupies residues 850 to 869; it reads SKFLQFQLTVNVVAVIVAFT. The Extracellular segment spans residues 870 to 879; the sequence is GACITQDSPL. A helical transmembrane segment spans residues 880–900; the sequence is KAVQMLWVNLIMDTFASLALA. The Cytoplasmic portion of the chain corresponds to 901–920; it reads TEPPTESLLLRKPYGRDKPL. A helical membrane pass occupies residues 921 to 943; the sequence is ISRTMMKNILGHAVYQLAIIFTL. Over 944–961 the chain is Extracellular; it reads LFVGELFFDIDSGRNAPL. The helical transmembrane segment at 962–983 threads the bilayer; sequence HSPPSEHYTIIFNTFVMMQLFN. At 984–1002 the chain is on the cytoplasmic side; sequence EINARKIHGERNVFDGIFS. The helical transmembrane segment at 1003 to 1024 threads the bilayer; that stretch reads NPIFCTIVLGTFGIQIVIVQFG. At 1025 to 1034 the chain is on the extracellular side; the sequence is GKPFSCSPLS. A helical transmembrane segment spans residues 1035-1056; the sequence is TEQWLWCLFVGVGELVWGQVIA. The Cytoplasmic portion of the chain corresponds to 1057–1220; sequence TIPTSQLKCL…SPLHSVETSL (164 aa). Thr1079 is modified (phosphothreonine). A calmodulin-binding subdomain A region spans residues 1097 to 1114; sequence LRRGQILWFRGLNRIQTQ. At Thr1113 the chain carries Phosphothreonine; by PKC. The calmodulin-binding subdomain B stretch occupies residues 1115-1124; the sequence is IRVVKAFRSS. The interval 1166–1186 is disordered; that stretch reads ENEERLRAPPPPSPNQNNNAI.

Belongs to the cation transport ATPase (P-type) (TC 3.A.3) family. Type IIB subfamily. In terms of assembly, interacts with PDZD11. Interacts (via N-terminus) with YWHAE. As to expression, highly expressed in the cerebellum. Expressed in adrenal glands.

Its subcellular location is the cell membrane. The protein resides in the presynaptic cell membrane. It carries out the reaction Ca(2+)(in) + ATP + H2O = Ca(2+)(out) + ADP + phosphate + H(+). Down-regulated by YWHAE. Functionally, ATP-driven Ca(2+) ion pump involved in the maintenance of basal intracellular Ca(2+) levels at the presynaptic terminals. Uses ATP as an energy source to transport cytosolic Ca(2+) ions across the plasma membrane to the extracellular compartment. May counter-transport protons, but the mechanism and the stoichiometry of this Ca(2+)/H(+) exchange remains to be established. The protein is Plasma membrane calcium-transporting ATPase 3 of Homo sapiens (Human).